Consider the following 455-residue polypeptide: Notoamide E oxidase notB' (455 aa).

The helical transmembrane segment at Pro-11–Leu-31 threads the bilayer. Residues Glu-48 and Gly-61 each coordinate FAD. Asn-75 is a glycosylation site (N-linked (GlcNAc...) asparagine). Arg-121 lines the FAD pocket. Catalysis depends on residues Arg-199 and Tyr-229. FAD-binding residues include Asp-324 and Gly-337.

It belongs to the paxM FAD-dependent monooxygenase family. It depends on FAD as a cofactor.

The protein resides in the membrane. It catalyses the reaction notoamide E + NADPH + O2 + H(+) = notoamide C + NADP(+) + H2O. The enzyme catalyses notoamide E + NADPH + O2 + H(+) = notoamide D + NADP(+) + H2O. Its pathway is alkaloid biosynthesis. FAD-dependent monooxygenase; part of the gene cluster that mediates the biosynthesis of notoamide, a fungal indole alkaloid that belongs to a family of natural products containing a characteristic bicyclo[2.2.2]diazaoctane core. The first step of notoamide biosynthesis involves coupling of L-proline and L-tryptophan by the bimodular NRPS notE', to produce cyclo-L-tryptophan-L-proline called brevianamide F. The reverse prenyltransferase notF' then acts as a deoxybrevianamide E synthase and converts brevianamide F to deoxybrevianamide E via reverse prenylation at C-2 of the indole ring leading to the bicyclo[2.2.2]diazaoctane core. Deoxybrevianamide E is further hydroxylated at C-6 of the indole ring, likely catalyzed by the cytochrome P450 monooxygenase notG', to yield 6-hydroxy-deoxybrevianamide E. 6-hydroxy-deoxybrevianamide E is a specific substrate of the prenyltransferase notC' for normal prenylation at C-7 to produce 6-hydroxy-7-prenyl-deoxybrevianamide, also called notoamide S. As the proposed pivotal branching point in notoamide biosynthesis, notoamide S can be diverted to notoamide E through an oxidative pyran ring closure putatively catalyzed by either notH' cytochrome P450 monooxygenase or the notD' FAD-linked oxidoreductase. This step would be followed by an indole 2,3-epoxidation-initiated pinacol-like rearrangement catalyzed by the notB' FAD-dependent monooxygenase leading to the formation of notoamide C and notoamide D. On the other hand notoamide S is converted to notoamide T by notH' (or notD'), a bifunctional oxidase that also functions as the intramolecular Diels-Alderase responsible for generation of (-)-notoamide T. To generate antipodal (+)-notoaminide T, notH (or notD) in Aspergillus strain MF297-2 is expected to catalyze a Diels-Alder reaction leading to the opposite stereochemistry. The remaining oxidoreductase notD' (or notH') likely catalyzes the oxidative pyran ring formation to yield (-)-stephacidin A. The FAD-dependent monooxygenase notI' is highly similar to notB' and is predicted to catalyze a similar conversion from (-)-stephacidin A to (+)-notoamide B via the 2,3-epoxidation of (-)-stephacidin A followed by a pinacol-type rearrangement. Finally, it remains unclear which enzyme could be responsible for the final hydroxylation steps leading to notoamide A and sclerotiamide. This Aspergillus versicolor protein is Notoamide E oxidase notB'.